The sequence spans 452 residues: Multifunctional glycoside hydrolase (452 aa).

Positions 17, 118, and 162 each coordinate substrate. Residue E163 is the Proton donor of the active site. Y303 is a binding site for substrate. E361 acts as the Nucleophile in catalysis. Substrate is bound by residues W407 and 414–415 (EW).

The protein belongs to the glycosyl hydrolase 1 family. Monomer. Homotrimer.

The catalysed reaction is Hydrolysis of terminal, non-reducing beta-D-glucosyl residues with release of beta-D-glucose.. It catalyses the reaction Hydrolysis of terminal non-reducing beta-D-galactose residues in beta-D-galactosides.. It carries out the reaction Hydrolysis of (1-&gt;4)-beta-D-xylans, to remove successive D-xylose residues from the non-reducing termini.. The enzyme catalyses Hydrolysis of (1-&gt;4)-linkages in (1-&gt;4)-beta-D-glucans, to remove successive glucose units.. The catalysed reaction is Hydrolysis of (1-&gt;4)-beta-D-glucosidic linkages in cellulose and cellotetraose, releasing cellobiose from the non-reducing ends of the chains.. It functions in the pathway glycan metabolism; beta-D-glucan degradation. The protein operates within glycan metabolism; cellulose degradation. Its activity is regulated as follows. Slight activation by Mn(2+), Ni(2+) and K(+). Slight inhibition by Fe(3+), Zn(2+), Co(2+), Mg(2+), Cu(2+), Na(+) and NH4(+). Has high beta-D-glucosidase, exoglucanase, beta-D-xylosidase, beta-D-galactosidase, and transgalactosylation activities in vitro. Has a very broad substrate specificity with the highest activity with p-nitrophenyl beta-D-galactopyranoside (pNPGal) as substrate. Active with pNP-beta-D-glucopyranoside (pNPGlu), pNP-beta-D-cellobioside (pNPC), lactose, pNP-beta-D-xylopyranoside (pNPX) and cellobiose in the order of decreasing activity, respectively. Very low activity with soluble polysaccharides synanthrin and locust bean gum. Very low, but detectable activity with insoluble substrates such as cotton and filter paper. No activity with pNP-alpha-L-arabinofuranoside (pNPAr) or carboxymethylcellulose (CMC) as substrates. Synthesizes galactooligosaccharides (GalOS) from lactose. Hydrolyzes pretreated corn stover releasing both glucose and xylose. This multifunctional enzyme may provide C.owensensis the benefit of utilizing a wide variety of available carbon sources in its natural growing environment as the ability to convert a wide range of soluble oligosaccharides to monoses is required in order to assimilate them. This chain is Multifunctional glycoside hydrolase, found in Caldicellulosiruptor owensensis (strain ATCC 700167 / DSM 13100 / OL).